Consider the following 566-residue polypeptide: MQPIISFEQFTFQYGHAAQPTLSDITFHIYPGEKVLIAGRSGSGKSTLAHCINGLIPFSYEGNSTGNVLIAGKDPREGSIFEQSKQVGTILQDQDAQFIGLTVEEDVAFYLENECVKQDNMKKIVSDSLRKVKMHTFHKQSPHELSGGQKQTVSLAGLLTTNADILLFDEPLANLDPLSAIHTIELMKDIHEQYNKTIVIIEHRIEEIFKLDLDKVILIDEGKVIAMGTPKEILASNILPRIGLREPIYIEALKRLHFDSNNDVIYPMENLQKEKVSNVIKEWMEKQVILKRNAKNKELLKVENLSFSYPNKQKVLENVNLLIYEGEIVALLGHNGAGKSTLAHSLIGINKMKNGKIALKGEDISSWSIRKRGEIISYVMQNPNHMITQPTVFEEVSFTLTLHNFSKEEIKNKVEGILKICGLYPFRNWPIQALSYGQKKRLTIASVLTTNPKLIILDEPTAGQDYYHYKQFMSFIKNLAKKGISFVVITHDMNLALEYTDRAVVLHEGKIIADNTVFDVLGNQETLQRANLRESSLTKLIKFSGIACPEKFMELYLDSTRREEGA.

2 consecutive ABC transporter domains span residues 5 to 246 (ISFE…GLRE) and 300 to 533 (LKVE…ANLR). ATP is bound by residues 39 to 46 (GRSGSGKS) and 333 to 340 (GHNGAGKS).

Belongs to the ABC transporter superfamily.

The protein localises to the cell membrane. Its function is as follows. Probably part of an ABC transporter complex. Responsible for energy coupling to the transport system. In Bacillus cereus (strain ATCC 14579 / DSM 31 / CCUG 7414 / JCM 2152 / NBRC 15305 / NCIMB 9373 / NCTC 2599 / NRRL B-3711), this protein is Putative ABC transporter ATP-binding protein BC_2655.